Reading from the N-terminus, the 388-residue chain is MNLHEYQAKSLFAEYGLPVSEGFACDTAQEAVEAAGRIGGNLWVVKCQVHAGGRGKAGGVKVTGDKEEIRAFAEHWLGKNLVTYQTDEKGQPVAKILVESCTDIANELYLGAVVDRSTRRVVFMASTEGGVEIEKVAEETPELIHKAIIDPLTGPQPYQARDLGFKLGLNPTQMKQFTKIFMGLATMFVDHDFALLEINPLVITTEGNLHCLDGKIGIDGNALFRQPKVKAMHDPSQDDAREAHAAMFELNYVALDGNVGCMVNGAGLAMGTMDIVNLHGGKPANFLDVGGGATKERVAEAFKIILSDSNVKAVLVNIFGGIVRCDMIAEGIIGAVKEVGVKVPVVVRLEGTNAELGREVLAKSGLDIIAATSLTDAAERVVKAAEGK.

The region spanning 9–244 (KSLFAEYGLP…PSQDDAREAH (236 aa)) is the ATP-grasp domain. ATP contacts are provided by residues K46, 53–55 (GRG), E99, T102, and E107. Mg(2+)-binding residues include N199 and D213. Substrate is bound by residues N264 and 321-323 (GIV).

This sequence belongs to the succinate/malate CoA ligase beta subunit family. As to quaternary structure, heterotetramer of two alpha and two beta subunits. The cofactor is Mg(2+).

The enzyme catalyses succinate + ATP + CoA = succinyl-CoA + ADP + phosphate. It catalyses the reaction GTP + succinate + CoA = succinyl-CoA + GDP + phosphate. It participates in carbohydrate metabolism; tricarboxylic acid cycle; succinate from succinyl-CoA (ligase route): step 1/1. In terms of biological role, succinyl-CoA synthetase functions in the citric acid cycle (TCA), coupling the hydrolysis of succinyl-CoA to the synthesis of either ATP or GTP and thus represents the only step of substrate-level phosphorylation in the TCA. The beta subunit provides nucleotide specificity of the enzyme and binds the substrate succinate, while the binding sites for coenzyme A and phosphate are found in the alpha subunit. The protein is Succinate--CoA ligase [ADP-forming] subunit beta of Shewanella putrefaciens (strain CN-32 / ATCC BAA-453).